The sequence spans 430 residues: UPF0597 protein Clos_2050 (430 aa).

It belongs to the UPF0597 family.

The chain is UPF0597 protein Clos_2050 from Alkaliphilus oremlandii (strain OhILAs) (Clostridium oremlandii (strain OhILAs)).